A 336-amino-acid polypeptide reads, in one-letter code: 4-hydroxythreonine-4-phosphate dehydrogenase (336 aa).

Substrate-binding residues include H135 and T136. The a divalent metal cation site is built by H165, H210, and H265. Positions 273, 282, and 291 each coordinate substrate.

The protein belongs to the PdxA family. In terms of assembly, homodimer. The cofactor is Zn(2+). Requires Mg(2+) as cofactor. It depends on Co(2+) as a cofactor.

The protein localises to the cytoplasm. The catalysed reaction is 4-(phosphooxy)-L-threonine + NAD(+) = 3-amino-2-oxopropyl phosphate + CO2 + NADH. It functions in the pathway cofactor biosynthesis; pyridoxine 5'-phosphate biosynthesis; pyridoxine 5'-phosphate from D-erythrose 4-phosphate: step 4/5. In terms of biological role, catalyzes the NAD(P)-dependent oxidation of 4-(phosphooxy)-L-threonine (HTP) into 2-amino-3-oxo-4-(phosphooxy)butyric acid which spontaneously decarboxylates to form 3-amino-2-oxopropyl phosphate (AHAP). This Marinobacter nauticus (strain ATCC 700491 / DSM 11845 / VT8) (Marinobacter aquaeolei) protein is 4-hydroxythreonine-4-phosphate dehydrogenase.